A 537-amino-acid polypeptide reads, in one-letter code: Phosphoenolpyruvate carboxykinase (ATP) (537 aa).

Arginine 61, tyrosine 194, and lysine 200 together coordinate substrate. Residues lysine 200, histidine 219, and 235 to 243 (GLSGTGKTT) each bind ATP. Mn(2+)-binding residues include lysine 200 and histidine 219. Aspartate 256 contacts Mn(2+). ATP contacts are provided by glutamate 284, arginine 322, and threonine 448. Residue arginine 322 participates in substrate binding.

It belongs to the phosphoenolpyruvate carboxykinase (ATP) family. The cofactor is Mn(2+).

Its subcellular location is the cytoplasm. The catalysed reaction is oxaloacetate + ATP = phosphoenolpyruvate + ADP + CO2. Its pathway is carbohydrate biosynthesis; gluconeogenesis. Functionally, involved in the gluconeogenesis. Catalyzes the conversion of oxaloacetate (OAA) to phosphoenolpyruvate (PEP) through direct phosphoryl transfer between the nucleoside triphosphate and OAA. The polypeptide is Phosphoenolpyruvate carboxykinase (ATP) (Bradyrhizobium sp. (strain ORS 278)).